The sequence spans 892 residues: Alanine--tRNA ligase (892 aa).

Zn(2+) is bound by residues His-574, His-578, Cys-676, and His-680.

The protein belongs to the class-II aminoacyl-tRNA synthetase family. Requires Zn(2+) as cofactor.

It localises to the cytoplasm. The catalysed reaction is tRNA(Ala) + L-alanine + ATP = L-alanyl-tRNA(Ala) + AMP + diphosphate. Its function is as follows. Catalyzes the attachment of alanine to tRNA(Ala) in a two-step reaction: alanine is first activated by ATP to form Ala-AMP and then transferred to the acceptor end of tRNA(Ala). Also edits incorrectly charged Ser-tRNA(Ala) and Gly-tRNA(Ala) via its editing domain. The protein is Alanine--tRNA ligase of Prochlorococcus marinus (strain MIT 9313).